The following is a 414-amino-acid chain: Na(+)-translocating NADH-quinone reductase subunit B (414 aa).

4 helical membrane-spanning segments follow: residues 23–40 (WFAL…PGLV), 56–76 (IMIM…YNAG), 129–149 (FLPI…LFCM), and 164–184 (ILFA…LGIT). FMN phosphoryl threonine is present on T236. 5 helical membrane passes run 268-288 (IPGS…AMIV), 297-317 (IIAG…VIGS), 322-342 (MFSM…GMFF), 358-378 (WWYG…NPAY), and 381-401 (GMML…HLVV).

It belongs to the NqrB/RnfD family. In terms of assembly, composed of six subunits; NqrA, NqrB, NqrC, NqrD, NqrE and NqrF. It depends on FMN as a cofactor.

The protein resides in the cell inner membrane. It carries out the reaction a ubiquinone + n Na(+)(in) + NADH + H(+) = a ubiquinol + n Na(+)(out) + NAD(+). Its function is as follows. NQR complex catalyzes the reduction of ubiquinone-1 to ubiquinol by two successive reactions, coupled with the transport of Na(+) ions from the cytoplasm to the periplasm. NqrA to NqrE are probably involved in the second step, the conversion of ubisemiquinone to ubiquinol. This is Na(+)-translocating NADH-quinone reductase subunit B from Vibrio vulnificus (strain CMCP6).